The primary structure comprises 347 residues: GMP reductase (347 aa).

An NADP(+)-binding site is contributed by 108–131; it reads ADFEKTKQILDLNPALNFVCIDVA. Residues G181 and G183 each coordinate K(+). C186 functions as the Thioimidate intermediate in the catalytic mechanism. NADP(+) is bound at residue 216-239; that stretch reads IVSDGGCTTPGDVAKAFGGGADFV.

The protein belongs to the IMPDH/GMPR family. GuaC type 1 subfamily. In terms of assembly, homotetramer.

It catalyses the reaction IMP + NH4(+) + NADP(+) = GMP + NADPH + 2 H(+). Functionally, catalyzes the irreversible NADPH-dependent deamination of GMP to IMP. It functions in the conversion of nucleobase, nucleoside and nucleotide derivatives of G to A nucleotides, and in maintaining the intracellular balance of A and G nucleotides. This is GMP reductase from Escherichia coli O139:H28 (strain E24377A / ETEC).